The sequence spans 85 residues: Small ribosomal subunit protein bS20 (85 aa).

Belongs to the bacterial ribosomal protein bS20 family.

Functionally, binds directly to 16S ribosomal RNA. This is Small ribosomal subunit protein bS20 from Borrelia turicatae (strain 91E135).